Here is a 532-residue protein sequence, read N- to C-terminus: Intercellular adhesion molecule 1 (532 aa).

The N-terminal stretch at 1–27 is a signal peptide; it reads MAPSSPRPALPALLVLLGALFPGPGNA. At 28-480 the chain is on the extracellular side; sequence QTSVSPPKVI…TVNVLSPRYE (453 aa). Ig-like C2-type domains are found at residues 41 to 103 and 128 to 193; these read GGSV…QSTA and GKDL…LDLR. 3 disulfides stabilise this stretch: Cys48–Cys92, Cys52–Cys96, and Cys135–Cys186. The N-linked (GlcNAc...) asparagine glycan is linked to Asn145. Positions 152 to 154 match the Cell attachment site; atypical motif; the sequence is RGE. N-linked (GlcNAc...) asparagine glycans are attached at residues Asn183, Asn202, Asn267, and Asn296. 2 consecutive Ig-like C2-type domains span residues 230-297 and 325-378; these read DTQG…LGNQ and GTEV…LEVA. The cysteines at positions 237 and 290 are disulfide-linked. A disulfide bridge connects residues Cys332 and Cys371. 2 N-linked (GlcNAc...) asparagine glycosylation sites follow: Asn385 and Asn406. Intrachain disulfides connect Cys403/Cys419, Cys419/Cys457, and Cys431/Cys457. Positions 412 to 464 constitute an Ig-like C2-type 5 domain; it reads NSQQTPMCQASGNPLPELKCLKDGTFPLPVGESVTVTRDLEGTYLCRARSTQG. The helical transmembrane segment at 481 to 503 threads the bilayer; the sequence is IVIITVVAAAVIMGTAGLSTYLY. Residues 504–532 lie on the Cytoplasmic side of the membrane; it reads NRQRKIRKYRLQQAQKGTPMKPNTQATPP. Thr521 and Thr530 each carry phosphothreonine.

The protein belongs to the immunoglobulin superfamily. ICAM family. Homodimer. Interacts with MUC1 and promotes cell aggregation in epithelial cells. Interacts with ARHGEF26/SGEF. Interacts (on T cell side) with CD81, CD247 and CD9 at immunological synapses between antigen-presenting cells and T cells. Monoubiquitinated, which is promoted by MARCH9 and leads to endocytosis.

Its subcellular location is the membrane. ICAM proteins are ligands for the leukocyte adhesion protein LFA-1 (integrin alpha-L/beta-2). During leukocyte trans-endothelial migration, ICAM1 engagement promotes the assembly of endothelial apical cups through ARHGEF26/SGEF and RHOG activation. The chain is Intercellular adhesion molecule 1 (ICAM1) from Pan troglodytes (Chimpanzee).